The following is a 91-amino-acid chain: Small ribosomal subunit protein bS18 (91 aa).

A disordered region spans residues 1-27; the sequence is MTQQSNTERKPRAKGPKRPRKPKVDPF. Residues 11 to 21 show a composition bias toward basic residues; it reads PRAKGPKRPRK.

Belongs to the bacterial ribosomal protein bS18 family. As to quaternary structure, part of the 30S ribosomal subunit. Forms a tight heterodimer with protein bS6.

Functionally, binds as a heterodimer with protein bS6 to the central domain of the 16S rRNA, where it helps stabilize the platform of the 30S subunit. The polypeptide is Small ribosomal subunit protein bS18 (Deinococcus geothermalis (strain DSM 11300 / CIP 105573 / AG-3a)).